Consider the following 394-residue polypeptide: DNA primase large subunit PriL (394 aa).

Positions 231, 340, 351, and 357 each coordinate [4Fe-4S] cluster.

This sequence belongs to the eukaryotic-type primase large subunit family. In terms of assembly, heterodimer of a small subunit (PriS) and a large subunit (PriL). Requires [4Fe-4S] cluster as cofactor.

Its function is as follows. Regulatory subunit of DNA primase, an RNA polymerase that catalyzes the synthesis of short RNA molecules used as primers for DNA polymerase during DNA replication. Stabilizes and modulates the activity of the small subunit, increasing the rate of DNA synthesis, and conferring RNA synthesis capability. The DNA polymerase activity may enable DNA primase to also catalyze primer extension after primer synthesis. May also play a role in DNA repair. The chain is DNA primase large subunit PriL from Pyrococcus horikoshii (strain ATCC 700860 / DSM 12428 / JCM 9974 / NBRC 100139 / OT-3).